We begin with the raw amino-acid sequence, 186 residues long: GMP synthase [glutamine-hydrolyzing] subunit A (186 aa).

The 184-residue stretch at 3-186 folds into the Glutamine amidotransferase type-1 domain; sequence MILIINNHGQ…FENFYDVCRS (184 aa). The active-site Nucleophile is Cys77. Catalysis depends on residues His164 and Glu166.

Heterodimer composed of a glutamine amidotransferase subunit (A) and a GMP-binding subunit (B).

It carries out the reaction XMP + L-glutamine + ATP + H2O = GMP + L-glutamate + AMP + diphosphate + 2 H(+). Its pathway is purine metabolism; GMP biosynthesis; GMP from XMP (L-Gln route): step 1/1. Catalyzes the synthesis of GMP from XMP. The protein is GMP synthase [glutamine-hydrolyzing] subunit A of Methanothermobacter thermautotrophicus (strain ATCC 29096 / DSM 1053 / JCM 10044 / NBRC 100330 / Delta H) (Methanobacterium thermoautotrophicum).